Here is a 420-residue protein sequence, read N- to C-terminus: Serine hydroxymethyltransferase (420 aa).

(6S)-5,6,7,8-tetrahydrofolate is bound by residues Leu-121 and 125-127 (GHL). The residue at position 230 (Lys-230) is an N6-(pyridoxal phosphate)lysine. 355-357 (SPF) contacts (6S)-5,6,7,8-tetrahydrofolate.

This sequence belongs to the SHMT family. As to quaternary structure, homodimer. Pyridoxal 5'-phosphate is required as a cofactor.

It localises to the cytoplasm. The catalysed reaction is (6R)-5,10-methylene-5,6,7,8-tetrahydrofolate + glycine + H2O = (6S)-5,6,7,8-tetrahydrofolate + L-serine. It participates in one-carbon metabolism; tetrahydrofolate interconversion. It functions in the pathway amino-acid biosynthesis; glycine biosynthesis; glycine from L-serine: step 1/1. Functionally, catalyzes the reversible interconversion of serine and glycine with tetrahydrofolate (THF) serving as the one-carbon carrier. This reaction serves as the major source of one-carbon groups required for the biosynthesis of purines, thymidylate, methionine, and other important biomolecules. Also exhibits THF-independent aldolase activity toward beta-hydroxyamino acids, producing glycine and aldehydes, via a retro-aldol mechanism. In Streptococcus mutans serotype c (strain ATCC 700610 / UA159), this protein is Serine hydroxymethyltransferase.